A 272-amino-acid chain; its full sequence is Cell division protein FtsQ (272 aa).

Residues 1–20 are Cytoplasmic-facing; it reads MSSYAPREIPLDIRLMQGTS. The helical transmembrane segment at 21–40 threads the bilayer; that stretch reads RALFWLVALGCLFVAGHWLM. At 41–272 the chain is on the periplasmic side; that stretch reads QRNWWDIRAV…KTPQPAGRKD (232 aa). A POTRA domain is found at 45–114; sequence WDIRAVRLQG…MQLAVTLQAQ (70 aa).

It belongs to the FtsQ/DivIB family. FtsQ subfamily. As to quaternary structure, part of a complex composed of FtsB, FtsL and FtsQ.

It localises to the cell inner membrane. Functionally, essential cell division protein. May link together the upstream cell division proteins, which are predominantly cytoplasmic, with the downstream cell division proteins, which are predominantly periplasmic. May control correct divisome assembly. This chain is Cell division protein FtsQ, found in Thiomonas arsenitoxydans (strain DSM 22701 / CIP 110005 / 3As).